Here is a 246-residue protein sequence, read N- to C-terminus: Chalcone--flavanone isomerase 1 (246 aa).

Residues threonine 59, asparagine 124, and serine 201 each contribute to the substrate site.

The protein belongs to the chalcone isomerase family. In terms of tissue distribution, mostly expressed in siliques and flowers, and, to a lower extent, in leaves.

It catalyses the reaction a chalcone = a flavanone.. It participates in secondary metabolite biosynthesis; flavonoid biosynthesis. Functionally, catalyzes the intramolecular cyclization of bicyclic chalcones into tricyclic (S)-flavanones. Responsible for the isomerization of 4,2',4',6'-tetrahydroxychalcone (also termed chalcone) into naringenin. The sequence is that of Chalcone--flavanone isomerase 1 (CHI1) from Arabidopsis thaliana (Mouse-ear cress).